Here is a 137-residue protein sequence, read N- to C-terminus: Lysozyme (137 aa).

The N-terminal stretch at 1 to 20 (MSAVLVLALVLLSLTCVTDA) is a signal peptide. The I-type lysozyme domain maps to 21–134 (ISDACLTCIC…WNAVKNQGCS (114 aa)). 6 disulfides stabilise this stretch: C25/C102, C30/C37, C42/C51, C64/C84, C74/C80, and C98/C116. The Proton donor role is filled by E33. Catalysis depends on D45, which acts as the Nucleophile. Residue 57-63 (KKSYWID) coordinates substrate. Substrate is bound by residues Y88 and 109–111 (HNG).

It belongs to the glycosyl hydrolase 22 family. Type-I lysozyme subfamily.

It is found in the secreted. It carries out the reaction Hydrolysis of (1-&gt;4)-beta-linkages between N-acetylmuramic acid and N-acetyl-D-glucosamine residues in a peptidoglycan and between N-acetyl-D-glucosamine residues in chitodextrins.. Its function is as follows. Has bacteriolytic activity. May play a role in digestion and in the host defense mechanisms against invading microbes. The sequence is that of Lysozyme (lysoz) from Ostrea edulis (Native oyster).